A 194-amino-acid chain; its full sequence is Gonadal protein gdl (194 aa).

Belongs to the gonadal family. As to expression, in stage 6-14 egg chamber nurse cells and oocytes of adult females and spermatocyte cysts and bundles of maturing sperm of larval, pupal and adult males.

In Drosophila melanogaster (Fruit fly), this protein is Gonadal protein gdl (gdl).